We begin with the raw amino-acid sequence, 788 residues long: LPS-assembly protein LptD (788 aa).

The first 23 residues, 1-23 (MSLTSRSLLATMISLALYGPAMA), serve as a signal peptide directing secretion.

It belongs to the LptD family. In terms of assembly, component of the lipopolysaccharide transport and assembly complex. Interacts with LptE and LptA.

Its subcellular location is the cell outer membrane. Functionally, together with LptE, is involved in the assembly of lipopolysaccharide (LPS) at the surface of the outer membrane. The protein is LPS-assembly protein LptD of Photobacterium profundum (strain SS9).